Consider the following 347-residue polypeptide: 4-hydroxy-tetrahydrodipicolinate reductase 1, chloroplastic (347 aa).

A chloroplast-targeting transit peptide spans 1–51; sequence MATNGLMASSSVFLHRPRIAFASRTNQTVGKYGKGRVSFMGIGTRRLPVVL. The residue at position 52 (S52) is an N-acetylserine. NAD(+)-binding positions include 79–84, 171–173, and 194–197; these read GCSGKM, GTT, and SPQM. H230 functions as the Proton donor/acceptor in the catalytic mechanism. Residue K234 is the Proton donor of the active site. 239–240 contributes to the (S)-2,3,4,5-tetrahydrodipicolinate binding site; sequence GT.

The protein belongs to the DapB family.

It localises to the plastid. Its subcellular location is the chloroplast. The enzyme catalyses (S)-2,3,4,5-tetrahydrodipicolinate + NAD(+) + H2O = (2S,4S)-4-hydroxy-2,3,4,5-tetrahydrodipicolinate + NADH + H(+). It catalyses the reaction (S)-2,3,4,5-tetrahydrodipicolinate + NADP(+) + H2O = (2S,4S)-4-hydroxy-2,3,4,5-tetrahydrodipicolinate + NADPH + H(+). Its pathway is amino-acid biosynthesis; L-lysine biosynthesis via DAP pathway; (S)-tetrahydrodipicolinate from L-aspartate: step 4/4. Catalyzes the conversion of 4-hydroxy-tetrahydrodipicolinate (HTPA) to tetrahydrodipicolinate. In Arabidopsis thaliana (Mouse-ear cress), this protein is 4-hydroxy-tetrahydrodipicolinate reductase 1, chloroplastic (DAPB1).